A 216-amino-acid chain; its full sequence is Refilin-B (216 aa).

Positions 1–55 are disordered; sequence MVGRLSLQDVPELVDTKKKGDGVLDSPDSGLPPSPSPSHWGLAATAGGGGERAPV. A phosphoserine mark is found at Ser-6 and Ser-26.

It belongs to the Refilin family. Interacts with FLNA and FLNB. Detected in various tissues, with highest expression in lung, followed by spleen.

Its subcellular location is the cytoplasm. The protein localises to the cytoskeleton. Involved in the regulation of the perinuclear actin network and nuclear shape through interaction with filamins. Plays an essential role in the formation of cartilaginous skeletal elements. In Mus musculus (Mouse), this protein is Refilin-B.